We begin with the raw amino-acid sequence, 414 residues long: WD repeat-containing protein jip5 (414 aa).

5 WD repeats span residues 9-48 (PLSA…SSDD), 73-112 (RHKG…VENK), 118-159 (AKDG…SNVS), 222-263 (VSSV…DQDE), and 319-356 (DETE…NDMD). Residues 39–65 (RLPSEESSDDDDGTASNSSARNGKGHI) form a disordered region. The segment at 357–414 (VDMAGGKRMFGGDSDDSDDDNDSEDSEQEQRQPVEPQRKRKKNKGKGKRDIIAFADID) is disordered. Acidic residues predominate over residues 369–383 (DSDDSDDDNDSEDSE). Over residues 394–403 (RKRKKNKGKG) the composition is skewed to basic residues.

The protein belongs to the WD repeat WDR55 family.

The protein resides in the nucleus. Its subcellular location is the nucleolus. The protein is WD repeat-containing protein jip5 (jip5) of Aspergillus clavatus (strain ATCC 1007 / CBS 513.65 / DSM 816 / NCTC 3887 / NRRL 1 / QM 1276 / 107).